A 360-amino-acid polypeptide reads, in one-letter code: 4-hydroxy-3-methylbut-2-en-1-yl diphosphate synthase (flavodoxin) (360 aa).

C265, C268, C300, and E307 together coordinate [4Fe-4S] cluster.

The protein belongs to the IspG family. It depends on [4Fe-4S] cluster as a cofactor.

The catalysed reaction is (2E)-4-hydroxy-3-methylbut-2-enyl diphosphate + oxidized [flavodoxin] + H2O + 2 H(+) = 2-C-methyl-D-erythritol 2,4-cyclic diphosphate + reduced [flavodoxin]. It functions in the pathway isoprenoid biosynthesis; isopentenyl diphosphate biosynthesis via DXP pathway; isopentenyl diphosphate from 1-deoxy-D-xylulose 5-phosphate: step 5/6. Its function is as follows. Converts 2C-methyl-D-erythritol 2,4-cyclodiphosphate (ME-2,4cPP) into 1-hydroxy-2-methyl-2-(E)-butenyl 4-diphosphate. This Brevibacillus brevis (strain 47 / JCM 6285 / NBRC 100599) protein is 4-hydroxy-3-methylbut-2-en-1-yl diphosphate synthase (flavodoxin).